The chain runs to 526 residues: Maturase K (526 aa).

The protein belongs to the intron maturase 2 family. MatK subfamily.

It is found in the plastid. The protein resides in the chloroplast. Usually encoded in the trnK tRNA gene intron. Probably assists in splicing its own and other chloroplast group II introns. The sequence is that of Maturase K from Iris pseudacorus (Yellow flag).